A 369-amino-acid chain; its full sequence is Polycomb group protein FERTILIZATION-INDEPENDENT ENDOSPERM (369 aa).

7 WD repeats span residues 31-73, 81-123, 126-166, 172-212, 238-275, 287-328, and 335-368; these read EGKK…AISA, DKEE…IHKS, GHGD…CILI, GHRY…TYVE, IHTNYVDCNRWFGDFILSKSVDNEILLWEPQLKENSPG, VPMC…PVLI, and QSKSVIRQTAMSVDGSTILACCEDGTIWRWDVIT.

The protein belongs to the WD repeat ESC family. Interacts directly with MEA. These two proteins are probably indirectly associated with FIS2. In plants, PcG complexes are probably composed of a member of the EZ family (CLF or MEA), FIE, and a member of the VEFS family (FIS2, VRN2 or EMF2). Component of the plant homeodomain / polycomb repressive complex 2 (PHD-PRC2) large complex during prolonged cold, composed of core PRC2 components (VRN2, EZA1, FIE and MSI1), and three related PHD finger proteins (VIL1, VIL2 and VIN3) that mediates histone H3 trimethylation on 'Lys-27' (H3K27me3). Binds to ALP1. Expressed in cauline leaves, root and stems. In the male reproductive organ, it is expressed in the developing anther; and is abundant in microspore mother cells, in microsporocytes and in the tapetum, but is absent from vascular bundles, the connective tissue and the filament. It is also absent from pollen grains at subsequent developmental stages. In the developing female reproductive organs, it is highly expressed in all cells of the young ovules primordium before archesporial differentiation. Then, it is highly expressed in the ovule sporophytic tissue and the megaspore mother cell before meiosis, but is absent from placenta or the developing carpel. Then, it decreases.

The protein resides in the nucleus. Polycomb group (PcG) protein. PcG proteins act by forming multiprotein complexes, which are required to maintain the transcriptionally repressive state of homeotic genes throughout development. PcG proteins are not required to initiate repression, but to maintain it during later stages of development. They probably act via the methylation of histones, rendering chromatin heritably changed in its expressibility. Required to prevent the proliferation of the central cell by repressing unknown target genes before fertilization. Probably also involved in floral repression mechanism established during early plant development. Regulates the anteroposterior organization of the endosperm. Interacts with the promoter and represses the transcription of genes such as PHE1, that are paternally active and maternally silenced. The chain is Polycomb group protein FERTILIZATION-INDEPENDENT ENDOSPERM (FIE) from Arabidopsis thaliana (Mouse-ear cress).